The chain runs to 277 residues: Zaragozic acid A biosynthesis cluster protein 1 (277 aa).

It participates in secondary metabolite biosynthesis. In terms of biological role, part of the gene cluster that mediates the biosynthesis of squalestatin S1 (SQS1, also known as zaragozic acid A), a heavily oxidized fungal polyketide that offers potent cholesterol lowering activity by targeting squalene synthase (SS). SQS1 is composed of a 2,8-dioxobicyclic[3.2.1]octane-3,4,5-tricarboxyclic acid core that is connected to two lipophilic polyketide arms. These initial steps feature the priming of an unusual benzoic acid starter unit onto the highly reducing polyketide synthase clz14, followed by oxaloacetate extension and product release to generate a tricarboxylic acid containing product. The phenylalanine ammonia lyase (PAL) clz10 and the acyl-CoA ligase clz12 are involved in transforming phenylalanine into benzoyl-CoA. The citrate synthase-like protein clz17 is involved in connecting the C-alpha-carbons of the hexaketide chain and oxaloacetate to afford the tricarboxylic acid unit. The potential hydrolytic enzymes, clz11 and clz13, are in close proximity to pks2 and may participate in product release. On the other side, the tetraketide arm is synthesized by a the squalestatin tetraketide synthase clz2 and enzymatically esterified to the core in the last biosynthetic step, by the acetyltransferase clz6. The biosynthesis of the tetraketide must involve 3 rounds of chain extension. After the first and second rounds methyl-transfer occurs, and in all rounds of extension the ketoreductase and dehydratase are active. The enoyl reductase and C-MeT of clz2 are not active in the final round of extension. The acetyltransferase clz6 appears to have a broad substrate selectivity for its acyl CoA substrate, allowing the in vitro synthesis of novel squalestatins. The biosynthesis of SQS1 requires several oxidative steps likely performed by oxidoreductases clz3, clz15 and clz16. Finally, in support of the identification of the cluster as being responsible for SQS1 production, the cluster contains a gene encoding a putative squalene synthase (SS) clz20, suggesting a likely mechanism for self-resistance. This chain is Zaragozic acid A biosynthesis cluster protein 1, found in Cochliobolus lunatus (Filamentous fungus).